A 473-amino-acid polypeptide reads, in one-letter code: NAD-dependent protein deacetylase SRT1 (473 aa).

The 241-residue stretch at S27 to K267 folds into the Deacetylase sirtuin-type domain. NAD(+) is bound by residues G52–W71 and Q114–D117. H134 (proton acceptor) is an active-site residue. Zn(2+)-binding residues include C142, C145, C167, and C172. Residues G209–S211, N235–Q237, and V253 each bind NAD(+). Residues L447 to A473 form a disordered region. Basic residues predominate over residues S453–K465.

This sequence belongs to the sirtuin family. Class IV subfamily. As to quaternary structure, binds to the promoter region of genes influenced by ethylene. Interacts with ENAP1; this interaction is enhanced in the presence of ethylene. Requires Zn(2+) as cofactor.

Its subcellular location is the nucleus. It catalyses the reaction N(6)-acetyl-L-lysyl-[protein] + NAD(+) + H2O = 2''-O-acetyl-ADP-D-ribose + nicotinamide + L-lysyl-[protein]. NAD-dependent protein deacetylase. Has deacetylase activity towards H3K9Ac. May have a function in the safeguard against genome instability and DNA damage to ensure plant cell growth. Involved in responses to ethylene leading to the transcriptional repression of some ethylene-responsive genes via the regulation of histone acetylation H3K9Ac. This Arabidopsis thaliana (Mouse-ear cress) protein is NAD-dependent protein deacetylase SRT1.